We begin with the raw amino-acid sequence, 338 residues long: 2-methyl-6-phytyl-1,4-hydroquinone methyltransferase, chloroplastic (338 aa).

The N-terminal 51 residues, 1–51, are a transit peptide targeting the chloroplast; it reads MASLMLNGAITFPKGLGSPGSNLHARSIPRPTLLSVTRTSTPRLSVATRCS. Over 52-307 the chain is Chloroplast intermembrane; it reads SSSVSSSRPS…VNNPFSFLGR (256 aa). The tract at residues 114-123 is SAM motif I; it reads VVDVGGGTGF. Residues 159-172 form an SAM motif II region; it reads CKIVEGDAEDLPFP. Residues 200-213 are SAM motif III; sequence RVLKIGGKACLIGP. The chain crosses the membrane as a helical span at residues 308–328; it reads FLLGTLAAAWFVLIPIYMWIK. At 329-338 the chain is on the stromal side; the sequence is DQIVPKDQPI.

The protein belongs to the class I-like SAM-binding methyltransferase superfamily. MPBQ/MBSQ MT family.

The protein localises to the plastid. The protein resides in the chloroplast inner membrane. The enzyme catalyses 2-methyl-6-phytyl-1,4-benzene-1,4-diol + S-adenosyl-L-methionine = 2,3-dimethyl-6-phytylbenzene-1,4-diol + S-adenosyl-L-homocysteine + H(+). It catalyses the reaction 2-methyl-6-(all-trans-nonaprenyl)benzene-1,4-diol + S-adenosyl-L-methionine = plastoquinol-9 + S-adenosyl-L-homocysteine + H(+). The catalysed reaction is 6-geranylgeranyl-2-methylbenzene-1,4-diol + S-adenosyl-L-methionine = 6-geranylgeranyl-2,3-dimethylbenzene-1,4-diol + S-adenosyl-L-homocysteine + H(+). It functions in the pathway cofactor biosynthesis; tocopherol biosynthesis. In terms of biological role, involved in a key methylation step in both tocopherols (vitamin E) and plastoquinone synthesis. Catalyzes the conversion of 2-methyl-6-phytyl-1,4-hydroquinone (MPBQ) to 2,3-dimethyl-6-phytyl-1,4-hydroquinone (DMPQ, a substrate for tocopherol cyclase), and 2-methyl-6-solanyl-1,4-benzoquinone (MSBQ) to plastoquinone. This chain is 2-methyl-6-phytyl-1,4-hydroquinone methyltransferase, chloroplastic (VTE3), found in Arabidopsis thaliana (Mouse-ear cress).